The chain runs to 279 residues: MLFIELLKAIFFGVIEGVTEWLPISSTGHLILVQEFIRLHQDKAFMEMFNIVIQLGAIIAVIVIYFERLNPFQPGKSPQQIRLTWQLWLKVAIACIPSIIIAVPLDDWFDAHFNHMLPIAIALIVYGIAFLWIEKRNQTLEPRVVKLSRMSYKTAFFIGCFQVLSIIPGTSRSGATILGAIILGASRTVAADFTFFLAIPTMFGYSGLKALKFFIDGNHLTLSQLLVLLVASLTAFAVSLYVIKLLTDYVKKHDFTVFGRYRIVLGSLLIVYSVFKSLF.

8 helical membrane passes run 2-22, 44-64, 85-105, 113-133, 163-183, 188-208, 225-245, and 255-275; these read LFIE…TEWL, AFME…VIVI, WQLW…AVPL, FNHM…FLWI, VLSI…AIIL, TVAA…YSGL, LLVL…VIKL, and FTVF…YSVF.

It belongs to the UppP family.

It is found in the cell membrane. The catalysed reaction is di-trans,octa-cis-undecaprenyl diphosphate + H2O = di-trans,octa-cis-undecaprenyl phosphate + phosphate + H(+). Its function is as follows. Catalyzes the dephosphorylation of undecaprenyl diphosphate (UPP). Confers resistance to bacitracin. This chain is Undecaprenyl-diphosphatase, found in Streptococcus equi subsp. equi (strain 4047).